The sequence spans 346 residues: tRNA N6-adenosine threonylcarbamoyltransferase (346 aa).

Residues His-111 and His-115 each coordinate Fe cation. Residues 134 to 138 (LVSGG), Asp-167, Gly-180, and Asn-277 each bind substrate. Position 305 (Asp-305) interacts with Fe cation.

It belongs to the KAE1 / TsaD family. Requires Fe(2+) as cofactor.

The protein localises to the cytoplasm. The enzyme catalyses L-threonylcarbamoyladenylate + adenosine(37) in tRNA = N(6)-L-threonylcarbamoyladenosine(37) in tRNA + AMP + H(+). In terms of biological role, required for the formation of a threonylcarbamoyl group on adenosine at position 37 (t(6)A37) in tRNAs that read codons beginning with adenine. Is involved in the transfer of the threonylcarbamoyl moiety of threonylcarbamoyl-AMP (TC-AMP) to the N6 group of A37, together with TsaE and TsaB. TsaD likely plays a direct catalytic role in this reaction. The chain is tRNA N6-adenosine threonylcarbamoyltransferase from Bordetella parapertussis (strain 12822 / ATCC BAA-587 / NCTC 13253).